A 451-amino-acid chain; its full sequence is MIFSDWPWRHWRQVRGETIALRLNDEQLNWRELCARVDELASGFAVQGVVEGSGVMLRAWNTPQTLLAWLALLQCGARVLPVNPQLPQPLLEELLPNLTLQFALVPDGENTFPALTSLHIQLVEGAHAATWQPTRLCSMTLTSGSTGLPKAAVHTYQAHLASAQGVLSLIPFGDHDDWLLSLPLFHVSGQGIMWRWLYAGARMTVRDKQPLEQMLAGCTHASLVPTQLWRLLVNRSSVSLKAVLLGGAAIPVELTEQAREQGIRCFCGYGLTEFASTVCAKEADGLADVGSPLPGREVKIVNNEVWLRAASMAEGYWRNGQLVSLVNDEGWYATRDRGEMHNGKLTIVGRLDNLFFSGGEGIQPEEVERVIAAHPAVLQVFIVPVADKEFGHRPVAVMEYDHESVDLSEWVKDKLARFQQPVRWLTLPPELKNGGIKISRQALKEWVQRQQ.

It belongs to the ATP-dependent AMP-binding enzyme family. MenE subfamily.

The catalysed reaction is 2-succinylbenzoate + ATP + CoA = 2-succinylbenzoyl-CoA + AMP + diphosphate. The protein operates within quinol/quinone metabolism; 1,4-dihydroxy-2-naphthoate biosynthesis; 1,4-dihydroxy-2-naphthoate from chorismate: step 5/7. It functions in the pathway quinol/quinone metabolism; menaquinone biosynthesis. In terms of biological role, converts 2-succinylbenzoate (OSB) to 2-succinylbenzoyl-CoA (OSB-CoA). The chain is 2-succinylbenzoate--CoA ligase from Escherichia coli (strain K12).